A 286-amino-acid polypeptide reads, in one-letter code: Enoyl-CoA hydratase ChsH3 (286 aa).

Residues 163 to 271 enclose the MaoC-like domain; sequence APERAPDLQV…RLVASVVAPT (109 aa). Catalysis depends on residues Asp189 and His194.

The protein belongs to the enoyl-CoA hydratase/isomerase family. In terms of assembly, homodimer.

The enzyme catalyses (22E)-3-oxochola-4,22-dien-24-oyl-CoA + H2O = (22S)-hydroxy-3-oxo-chol-4-ene-24-oyl-CoA. Its pathway is steroid metabolism; cholesterol degradation. Degradation of the cholesterol side chain involves 3 multistep beta-oxidation cycles, this is involved in the second cycle. Hydrates bulky steroid enoyl-CoA esters, has highest activity with 3-OCDO-CoA (3-oxochol-4,22-dien-24-oyl-CoA) making (22S)-HOCO-CoA, followed by octenoyl-CoA, with weaker activity on 3-OCDS-CoA (3-oxocholest-4,24-dien-26-oyl-CoA) and none on 3-OPDC-CoA (3-oxo-pregna-4,17-diene-20- carboxyl-CoA). Hydrates the same substrate as EchA19, but the 2 enzymes make different stereoisomers of the product. This chain is Enoyl-CoA hydratase ChsH3, found in Mycobacterium tuberculosis (strain ATCC 25618 / H37Rv).